The sequence spans 351 residues: D-alanine--D-alanine ligase (351 aa).

The ATP-grasp domain maps to 146 to 340 (KEIMLYNNIK…YEDLCESIVL (195 aa)). 173-226 (AFDYPMVVKPNSGGSSIGTRIVHDEAELAESLKDAYRFDDEIIVEEFITGREFS) is a binding site for ATP. 3 residues coordinate Mg(2+): Asp295, Glu307, and Asn309.

The protein belongs to the D-alanine--D-alanine ligase family. Mg(2+) serves as cofactor. It depends on Mn(2+) as a cofactor.

It is found in the cytoplasm. The enzyme catalyses 2 D-alanine + ATP = D-alanyl-D-alanine + ADP + phosphate + H(+). It participates in cell wall biogenesis; peptidoglycan biosynthesis. Functionally, cell wall formation. The polypeptide is D-alanine--D-alanine ligase (Pediococcus pentosaceus (strain ATCC 25745 / CCUG 21536 / LMG 10740 / 183-1w)).